The following is a 505-amino-acid chain: ATP synthase subunit alpha (505 aa).

Residue 170–177 participates in ATP binding; sequence GDRQTGKS.

The protein belongs to the ATPase alpha/beta chains family. As to quaternary structure, F-type ATPases have 2 components, CF(1) - the catalytic core - and CF(0) - the membrane proton channel. CF(1) has five subunits: alpha(3), beta(3), gamma(1), delta(1), epsilon(1). CF(0) has four main subunits: a(1), b(1), b'(1) and c(9-12).

Its subcellular location is the cellular thylakoid membrane. The catalysed reaction is ATP + H2O + 4 H(+)(in) = ADP + phosphate + 5 H(+)(out). In terms of biological role, produces ATP from ADP in the presence of a proton gradient across the membrane. The alpha chain is a regulatory subunit. The protein is ATP synthase subunit alpha of Prochlorococcus marinus (strain AS9601).